Here is a 197-residue protein sequence, read N- to C-terminus: Probable GTP-binding protein EngB (197 aa).

Positions 22-197 constitute an EngB-type G domain; sequence TGVEVAFAGR…FKEKLDTWYQ (176 aa). GTP contacts are provided by residues 30 to 37, 57 to 61, 75 to 78, 142 to 145, and 177 to 179; these read GRSNAGKS, GRTQL, DLPG, TKAD, and FSS. Positions 37 and 59 each coordinate Mg(2+).

Belongs to the TRAFAC class TrmE-Era-EngA-EngB-Septin-like GTPase superfamily. EngB GTPase family. The cofactor is Mg(2+).

Its function is as follows. Necessary for normal cell division and for the maintenance of normal septation. The sequence is that of Probable GTP-binding protein EngB from Francisella tularensis subsp. holarctica (strain FTNF002-00 / FTA).